The primary structure comprises 554 residues: Oxygen-dependent choline dehydrogenase (554 aa).

4–33 (DYIIIGAGSAGNVLATRLTEDPNTTVLLLE) lines the FAD pocket. Catalysis depends on His-473, which acts as the Proton acceptor.

This sequence belongs to the GMC oxidoreductase family. It depends on FAD as a cofactor.

It carries out the reaction choline + A = betaine aldehyde + AH2. It catalyses the reaction betaine aldehyde + NAD(+) + H2O = glycine betaine + NADH + 2 H(+). Its pathway is amine and polyamine biosynthesis; betaine biosynthesis via choline pathway; betaine aldehyde from choline (cytochrome c reductase route): step 1/1. Its function is as follows. Involved in the biosynthesis of the osmoprotectant glycine betaine. Catalyzes the oxidation of choline to betaine aldehyde and betaine aldehyde to glycine betaine at the same rate. This chain is Oxygen-dependent choline dehydrogenase, found in Klebsiella pneumoniae (strain 342).